A 264-amino-acid chain; its full sequence is Short-chain dehydrogenase/reductase malC (264 aa).

Residues 13 to 35 traverse the membrane as a helical segment; the sequence is GKNVLIIGGTSGIGFAVAQLVIE. Residues threonine 22, serine 23, isoleucine 25, serine 45, asparagine 46, lysine 49, aspartate 75, asparagine 88, arginine 130, valine 202, and threonine 204 each coordinate NADP(+). A glycan (N-linked (GlcNAc...) asparagine) is linked at asparagine 249.

The protein belongs to the short-chain dehydrogenases/reductases (SDR) family.

It localises to the membrane. It carries out the reaction 1-hydroxy-3-{[2-(1,1-dimethylallyl)-indol-3-yl]methyl}-6H,7H,8H-5lambda(5)-pyrrolo[1,2-a]pyrazine + NADPH + H(+) = 1-hydroxy-3-{[2-(1,1-dimethylallyl)-indol-3-yl]methyl}-4H,6H,7H,8H-pyrrolo[1,2-a]pyrazine + NADP(+). The catalysed reaction is 1-hydroxy-3-{[2-(1,1-dimethylallyl)-indol-3-yl]methyl}-4H,6H,7H,8H-pyrrolo[1,2-a]pyrazine = (+)-premalbrancheamide. It participates in alkaloid biosynthesis. Its function is as follows. Short-chain dehydrogenase/reductase; part of the gene cluster that mediates the biosynthesis of malbrancheamide, a dichlorinated fungal indole alkaloid that belongs to a family of natural products containing a characteristic bicyclo[2.2.2]diazaoctane core. The first step of malbrancheamide biosynthesis involves coupling of L-proline and L-tryptophan by malG, a bimodular NRPS, to produce L-Pro-L-Trp aldehyde through reductive offloading. This compound undergoes spontaneous cyclization and dehydration to give a dienamine which is reverse prenylated at C-2 by malE. The other prenyltransferase present in the cluster, malB, displays modest activity, suggesting that may be a redundant gene in the pathway. Subsequently, a [4+2] Diels-Alder cyclo-addition catalyzed by the bifunctional enzyme malC forms the characteristic bicyclo[2.2.2]diazaoctane ring of premalbrancheamid. The first reaction catalyzed is a NADPH-dependent reduction reaction in which the nicotinamide cofactor is a stoichiometric reagent. Either NADH or NADPH is effective as a cofactor. NADP(+) is required for stereocontrolled formation of premalbrancheamide, however it does not appear to be required as a formal stoichiometric reagent because the second reaction performed by malC, the [4+2] cycloaddition, is a balanced chemical reaction without requirement for hydride transfer to balance the reaction. Finally, the flavin-dependent halogenase malA catalyzes the iterative dichlorination of the indole ring of premalbrancheamide to yield C-9 monochlorinated malbrancheamide B, C-8 monochlorinated isomalbrancheamide B, and dichlorinated malbrancheamide. MalA is also able to brominate premalbrancheamide at C-9 to yield malbrancheamide C, and, to a lesser extend, at C-8 to yield isomalbrancheamide C. Finally, malA can brominate C-9 monochlorinated malbrancheamide B at C-8 to yield malbrancheamide D, or C-8 monochlorinated isomalbrancheamide B at C-9 to produce isomalbrancheamide D. This Malbranchea aurantiaca protein is Short-chain dehydrogenase/reductase malC.